The following is a 197-amino-acid chain: Protein GrpE (197 aa).

The segment at Met1–Pro39 is disordered.

The protein belongs to the GrpE family. In terms of assembly, homodimer.

It is found in the cytoplasm. Participates actively in the response to hyperosmotic and heat shock by preventing the aggregation of stress-denatured proteins, in association with DnaK and GrpE. It is the nucleotide exchange factor for DnaK and may function as a thermosensor. Unfolded proteins bind initially to DnaJ; upon interaction with the DnaJ-bound protein, DnaK hydrolyzes its bound ATP, resulting in the formation of a stable complex. GrpE releases ADP from DnaK; ATP binding to DnaK triggers the release of the substrate protein, thus completing the reaction cycle. Several rounds of ATP-dependent interactions between DnaJ, DnaK and GrpE are required for fully efficient folding. This chain is Protein GrpE, found in Escherichia coli O157:H7 (strain EC4115 / EHEC).